The following is a 205-amino-acid chain: High frequency lysogenization protein HflD homolog (205 aa).

Belongs to the HflD family.

The protein localises to the cytoplasm. The protein resides in the cell inner membrane. This Alkalilimnicola ehrlichii (strain ATCC BAA-1101 / DSM 17681 / MLHE-1) protein is High frequency lysogenization protein HflD homolog.